We begin with the raw amino-acid sequence, 100 residues long: Integration host factor subunit alpha (100 aa).

The interval 53-73 is disordered; it reads FDLRDKRQRPGRNPKTGEEIP.

The protein belongs to the bacterial histone-like protein family. As to quaternary structure, heterodimer of an alpha and a beta chain.

This protein is one of the two subunits of integration host factor, a specific DNA-binding protein that functions in genetic recombination as well as in transcriptional and translational control. In Pseudomonas aeruginosa (strain LESB58), this protein is Integration host factor subunit alpha.